A 118-amino-acid polypeptide reads, in one-letter code: Large ribosomal subunit protein uL24 (118 aa).

A disordered region spans residues 1–24; that stretch reads MSEQPHKQRTRTKRASLHEKQDQV.

It belongs to the universal ribosomal protein uL24 family. In terms of assembly, part of the 50S ribosomal subunit.

One of two assembly initiator proteins, it binds directly to the 5'-end of the 23S rRNA, where it nucleates assembly of the 50S subunit. In terms of biological role, located at the polypeptide exit tunnel on the outside of the subunit. This is Large ribosomal subunit protein uL24 from Halobacterium salinarum (strain ATCC 700922 / JCM 11081 / NRC-1) (Halobacterium halobium).